A 195-amino-acid chain; its full sequence is Interferon tau (195 aa).

An N-terminal signal peptide occupies residues 1-23 (MAFMLSLLMALVLVSYGLGGSLG). 2 cysteine pairs are disulfide-bonded: Cys52–Cys162 and Cys87–Cys109.

This sequence belongs to the alpha/beta interferon family. IFN-alphaII subfamily.

The protein resides in the secreted. Functionally, paracrine hormone primarily responsible for maternal recognition of pregnancy. Interacts with endometrial receptors, probably type I interferon receptors, and blocks estrogen receptor expression, preventing the estrogen-induced increase in oxytocin receptor expression in the endometrium. This results in the suppression of the pulsatile endometrial release of the luteolytic hormone prostaglandin F2-alpha, hindering the regression of the corpus luteum (luteolysis) and therefore a return to ovarian cyclicity. This, and a possible direct effect of IFN-tau on prostaglandin synthesis, leads in turn to continued ovarian progesterone secretion, which stimulates the secretion by the endometrium of the nutrients required for the growth of the conceptus. In summary, displays particularly high antiviral and antiproliferative potency concurrently with particular weak cytotoxicity, high antiluteolytic activity and immunomodulatory properties. In contrast with other IFNs, IFN-tau is not virally inducible. This chain is Interferon tau (IFNT), found in Giraffa camelopardalis (Giraffe).